The chain runs to 301 residues: MRMNQQDTHKENLEFNKLQKKLRRNVGNAITEYNMIEESDVVMACISGGKDSFAMLDILLGLQKSAPINFKVIAVNLDQKQPGFPEHILPNYFESLGIPYYIVDKDTYSVVREKIPEGKTTCGLCSRLRRGTLYSFAEKIGATKIALGHHMDDMVETMFLNMFYGSRLKSMPPKLRSDDQRNVVIRPLTYCREKDLIAYAEYREYPIIPCNLCGSQENLQRQNIKAMLIDWDTQTPGRVESIFKSTQNISPSQLADRNIFDFENLPLDRTGKRAEYEFTEAEVSSSNINIDESMFIDVTNI.

Residues 47–52 (SGGKDS) carry the PP-loop motif motif. [4Fe-4S] cluster contacts are provided by Cys-122, Cys-125, and Cys-213.

Belongs to the TtcA family. In terms of assembly, homodimer. Mg(2+) serves as cofactor. [4Fe-4S] cluster is required as a cofactor.

It is found in the cytoplasm. It carries out the reaction cytidine(32) in tRNA + S-sulfanyl-L-cysteinyl-[cysteine desulfurase] + AH2 + ATP = 2-thiocytidine(32) in tRNA + L-cysteinyl-[cysteine desulfurase] + A + AMP + diphosphate + H(+). It functions in the pathway tRNA modification. Catalyzes the ATP-dependent 2-thiolation of cytidine in position 32 of tRNA, to form 2-thiocytidine (s(2)C32). The sulfur atoms are provided by the cysteine/cysteine desulfurase (IscS) system. In Photobacterium profundum (strain SS9), this protein is tRNA-cytidine(32) 2-sulfurtransferase.